The primary structure comprises 112 residues: uncharacterized protein (112 aa).

This is an uncharacterized protein from Gallus gallus (Chicken).